The sequence spans 600 residues: Elongation factor 4 (600 aa).

The tr-type G domain occupies 6–188 (KLIRNFSIIA…AVVERIPAPK (183 aa)). Residues 18–23 (DHGKST) and 135–138 (NKID) contribute to the GTP site.

The protein belongs to the TRAFAC class translation factor GTPase superfamily. Classic translation factor GTPase family. LepA subfamily.

The protein localises to the cell inner membrane. The enzyme catalyses GTP + H2O = GDP + phosphate + H(+). In terms of biological role, required for accurate and efficient protein synthesis under certain stress conditions. May act as a fidelity factor of the translation reaction, by catalyzing a one-codon backward translocation of tRNAs on improperly translocated ribosomes. Back-translocation proceeds from a post-translocation (POST) complex to a pre-translocation (PRE) complex, thus giving elongation factor G a second chance to translocate the tRNAs correctly. Binds to ribosomes in a GTP-dependent manner. The chain is Elongation factor 4 from Sorangium cellulosum (strain So ce56) (Polyangium cellulosum (strain So ce56)).